A 147-amino-acid chain; its full sequence is Cystatin-9-like (147 aa).

A signal peptide spans 1 to 28 (MLGLPWKGGLSWALLLLLLGSQILLIYA). Residues C98 and C108 are joined by a disulfide bond. N-linked (GlcNAc...) asparagine glycans are attached at residues N117 and N139. C122 and C142 are oxidised to a cystine.

The protein belongs to the cystatin family. As to expression, specifically expressed in testis.

It localises to the secreted. In Homo sapiens (Human), this protein is Cystatin-9-like (CST9L).